The chain runs to 134 residues: RxLR effector protein Avh238 (134 aa).

A signal peptide spans 1–21; sequence MRGVFFVAVAVAIFARSSAEA. Positions 44–68 match the RxLR-dEER motif; it reads RFLRVADSEDDDLAAPADDGKTEER. The tract at residues 50 to 72 is disordered; the sequence is DSEDDDLAAPADDGKTEERAPKF. Over residues 61–70 the composition is skewed to basic and acidic residues; it reads DDGKTEERAP.

This sequence belongs to the RxLR effector family.

The protein localises to the secreted. Its subcellular location is the host cytoplasm. It is found in the host nucleus. Functionally, effector that, due to the lack of a histidine residue at position 79, is not able to induce cell death in tomato, tobacco, eggplant, potato, or in A.thaliana. The chain is RxLR effector protein Avh238 from Phytophthora sojae (Soybean stem and root rot agent).